Reading from the N-terminus, the 429-residue chain is Histidine--tRNA ligase (429 aa).

It belongs to the class-II aminoacyl-tRNA synthetase family. As to quaternary structure, homodimer.

It is found in the cytoplasm. It catalyses the reaction tRNA(His) + L-histidine + ATP = L-histidyl-tRNA(His) + AMP + diphosphate + H(+). The chain is Histidine--tRNA ligase from Pseudomonas putida (strain GB-1).